Here is a 147-residue protein sequence, read N- to C-terminus: Bis(5'-nucleosyl)-tetraphosphatase [asymmetrical] (147 aa).

Residues 1 to 139 (MALRACGLII…EMKAALQEGH (139 aa)) form the Nudix hydrolase domain. At Ala-2 the chain carries N-acetylalanine. The short motif at 43-64 (GHVEPGEDDLETALRETQEEAG) is the Nudix box element.

This sequence belongs to the Nudix hydrolase family. It depends on a divalent metal cation as a cofactor.

It carries out the reaction P(1),P(4)-bis(5'-guanosyl) tetraphosphate + H2O = GMP + GTP + 2 H(+). The enzyme catalyses a 5'-end CoA-ribonucleoside in mRNA + H2O = a 5'-end phospho-adenosine-phospho-ribonucleoside in mRNA + (R)-4'-phosphopantetheine + 2 H(+). It catalyses the reaction a 5'-end FAD-phospho-ribonucleoside in mRNA + H2O = a 5'-end phospho-adenosine-phospho-ribonucleoside in mRNA + FMN + 2 H(+). Catalyzes the asymmetric hydrolysis of diadenosine 5',5'''-P1,P4-tetraphosphate (Ap4A) to yield AMP and ATP. Exhibits decapping activity towards FAD-capped RNAs and dpCoA-capped RNAs in vitro. The sequence is that of Bis(5'-nucleosyl)-tetraphosphatase [asymmetrical] (NUDT2) from Homo sapiens (Human).